The chain runs to 481 residues: MFS transporter eqxG (481 aa).

Residues 1–13 (MATTDPAIAAPDD) show a composition bias toward low complexity. A disordered region spans residues 1 to 58 (MATTDPAIAAPDDSQLEAGRENIRANVGDALEKPSSSTGTMVDEPTDPNVVDWDGPHD). Asn64 carries an N-linked (GlcNAc...) asparagine glycan. The helical transmembrane segment at 72–92 (LHLVIVSLFTLAANLAATMFA) threads the bilayer. The N-linked (GlcNAc...) asparagine glycan is linked to Asn106. A run of 10 helical transmembrane segments spans residues 111–131 (AMTV…LAPL), 146–166 (FVYV…MFLV), 169–189 (IICG…VADL), 201–221 (LFTV…TVIF), 276–296 (PIVL…FLLF), 315–335 (GLAY…FSVL), 353–373 (LILM…YGWT), 380–400 (WIVP…VVIP), 403–423 (IYLV…ANLL), and 439–459 (LYVS…CLLF).

Belongs to the major facilitator superfamily.

It localises to the cell membrane. In terms of biological role, efflux pump that might be required for efficient secretion of equisetin or other secondary metabolies produced by the equisetin gene cluster. The protein is MFS transporter eqxG of Fusarium heterosporum.